A 190-amino-acid polypeptide reads, in one-letter code: Protein GrpE (190 aa).

The segment covering 1 to 18 (MTETPNTSSEEIQTSEPS) has biased composition (polar residues). A disordered region spans residues 1–21 (MTETPNTSSEEIQTSEPSPDN).

Belongs to the GrpE family. In terms of assembly, homodimer.

The protein localises to the cytoplasm. In terms of biological role, participates actively in the response to hyperosmotic and heat shock by preventing the aggregation of stress-denatured proteins, in association with DnaK and GrpE. It is the nucleotide exchange factor for DnaK and may function as a thermosensor. Unfolded proteins bind initially to DnaJ; upon interaction with the DnaJ-bound protein, DnaK hydrolyzes its bound ATP, resulting in the formation of a stable complex. GrpE releases ADP from DnaK; ATP binding to DnaK triggers the release of the substrate protein, thus completing the reaction cycle. Several rounds of ATP-dependent interactions between DnaJ, DnaK and GrpE are required for fully efficient folding. This is Protein GrpE from Chlamydia trachomatis serovar L2 (strain ATCC VR-902B / DSM 19102 / 434/Bu).